Consider the following 215-residue polypeptide: Nucleoside triphosphate pyrophosphatase (215 aa).

Catalysis depends on Asp-80, which acts as the Proton acceptor.

It belongs to the Maf family. Requires a divalent metal cation as cofactor.

Its subcellular location is the cytoplasm. The catalysed reaction is a ribonucleoside 5'-triphosphate + H2O = a ribonucleoside 5'-phosphate + diphosphate + H(+). It catalyses the reaction a 2'-deoxyribonucleoside 5'-triphosphate + H2O = a 2'-deoxyribonucleoside 5'-phosphate + diphosphate + H(+). Functionally, nucleoside triphosphate pyrophosphatase. May have a dual role in cell division arrest and in preventing the incorporation of modified nucleotides into cellular nucleic acids. This is Nucleoside triphosphate pyrophosphatase from Leifsonia xyli subsp. xyli (strain CTCB07).